A 189-amino-acid polypeptide reads, in one-letter code: Accessory gene regulator protein B (189 aa).

A run of 5 helical transmembrane segments spans residues 50–70, 83–103, 105–125, 143–163, and 164–184; these read VSLLCHMFLYTLTVHLTFFFI, LLCYIQSVIYFVLLPWIVGYV, VSSLIMYTLALVGLIIISIYA, KIKAICLTLIFLLISLFLNEP, and YQQLMLLGIVIISILQFPIFF.

This sequence belongs to the AgrB family.

The protein resides in the cell membrane. Essential for the production of a quorum sensing system signal molecule, the autoinducing peptide (AIP). This quorum sensing system is responsible for the regulation of the expression of virulence factor genes. Involved in the proteolytic processing of AgrD, the precursor of AIP. This is Accessory gene regulator protein B from Staphylococcus saprophyticus subsp. saprophyticus (strain ATCC 15305 / DSM 20229 / NCIMB 8711 / NCTC 7292 / S-41).